The chain runs to 849 residues: Probable receptor-like protein kinase At1g30570 (849 aa).

The signal sequence occupies residues 1–28 (MSKLRKKYLEHLLCVLIFFTYVIGYGEA). At 29–429 (QSKSFLVDCG…GHSVSDSKMR (401 aa)) the chain is on the extracellular side. 9 N-linked (GlcNAc...) asparagine glycosylation sites follow: Asn-40, Asn-57, Asn-94, Asn-122, Asn-158, Asn-268, Asn-271, Asn-305, and Asn-343. Residues 430–450 (IIWISVGAGIAIIIFFVFLGI) form a helical membrane-spanning segment. At 451–849 (LVVCLCKKRR…QTGSALHNSA (399 aa)) the chain is on the cytoplasmic side. The Protein kinase domain occupies 520-793 (FDDGLAIGVG…GEVLWSLEYV (274 aa)). Residues 526-534 (IGVGGFGKV) and Lys-548 contribute to the ATP site. Asp-644 serves as the catalytic Proton acceptor. Residues 810 to 849 (FSSSQAVEEAPESFTLPACSNQDSSETEQSQTGSALHNSA) are disordered. Residues 827 to 849 (ACSNQDSSETEQSQTGSALHNSA) show a composition bias toward polar residues.

It belongs to the protein kinase superfamily. Ser/Thr protein kinase family.

It is found in the cell membrane. The polypeptide is Probable receptor-like protein kinase At1g30570 (Arabidopsis thaliana (Mouse-ear cress)).